A 494-amino-acid chain; its full sequence is GlcNAc-binding protein A (494 aa).

Residues Met-1–Ala-21 form the signal peptide. The Chitin-binding type-4 domain occupies His-22 to Phe-192. The 50-residue stretch at Ala-435–Trp-484 folds into the Chitin-binding type-3 domain. Residues Val-474–Cys-494 form a disordered region.

This sequence belongs to the GbpA family.

The protein resides in the secreted. Functionally, probably interacts with GlcNAc residues. May promote attachment to both epithelial cell surfaces and chitin. This is GlcNAc-binding protein A from Yersinia enterocolitica serotype O:8 / biotype 1B (strain NCTC 13174 / 8081).